Consider the following 1101-residue polypeptide: Nuclear pore complex protein NUP107 (1101 aa).

It belongs to the nucleoporin Nup84/Nup107 family. In terms of assembly, part of the nuclear pore complex (NPC). The NPC has an eight-fold symmetrical structure comprising a central transport channel and two rings, the cytoplasmic and nuclear rings, to which eight filaments are attached. The cytoplasmic filaments have loose ends, while the nuclear filaments are joined in a distal ring, forming a nuclear basket. NPCs are highly dynamic in configuration and composition, and can be devided in 3 subcomplexes, the NUP62 subcomplex, the NUP107-160 subcomplex and the NUP93 subcomplex, containing approximately 30 different nucleoporin proteins.

The protein resides in the nucleus envelope. It is found in the nucleus. Its subcellular location is the nuclear pore complex. The chain is Nuclear pore complex protein NUP107 from Arabidopsis thaliana (Mouse-ear cress).